Consider the following 30-residue polypeptide: Cycloviolacin-H4 (30 aa).

A cross-link (cyclopeptide (Gly-Asn)) is located at residues 1–30; the sequence is GIPCAESCVWIPCTVTALLGCSCSNNVCYN. Disulfide bonds link cysteine 4–cysteine 21, cysteine 8–cysteine 23, and cysteine 13–cysteine 28.

In terms of processing, this is a cyclic peptide.

In terms of biological role, probably participates in a plant defense mechanism. Has potent hemolytic activity. The protein is Cycloviolacin-H4 of Viola hederacea (Australian violet).